A 151-amino-acid polypeptide reads, in one-letter code: MAKVQFTKRQETSQIFVHCSATKATMDVGVREIRQWHKEQGWLDVGYHFIIRRDGTVEAGRDQDAVGSHVKGYNSTSVGVCLVGGIDAKGNPEANFTPAQMQALRSLLVELKVQYTGAVLMAHHDVAPKACPSFDLKRWWEKNELVTSDHG.

His18, His123, and Cys131 together coordinate Zn(2+).

The protein belongs to the N-acetylmuramoyl-L-alanine amidase 2 family. As to quaternary structure, interacts with the viral RNA polymerase. Zn(2+) serves as cofactor.

The protein resides in the host cytoplasm. The catalysed reaction is Hydrolyzes the link between N-acetylmuramoyl residues and L-amino acid residues in certain cell-wall glycopeptides.. Binding to the viral RNA polymerase inhibits amidase activity. Functionally, endolysin with amidase activity that degrades host peptidoglycans and participates with the holin and spanin proteins in the sequential events which lead to the programmed host cell lysis releasing the mature viral particles. Once the holin has permeabilized the host cell membrane, the endolysin can reach the periplasm and breaking down the peptidoglycan layer. Its function is as follows. Plays an important role in the switch between viral transcription and genome replication. Once produced in sufficient amount, interacts with and inhibits the viral RNA polymerase that becomes unable to produce additional late transcripts. This lysozyme-polymerase complex in turn plays an active role in viral genome replication and packaging. This chain is Endolysin, found in Klebsiella pneumoniae (Bacteriophage KP32).